The following is a 360-amino-acid chain: Peptide chain release factor 1 (360 aa).

N5-methylglutamine is present on Gln235.

This sequence belongs to the prokaryotic/mitochondrial release factor family. In terms of processing, methylated by PrmC. Methylation increases the termination efficiency of RF1.

It is found in the cytoplasm. Functionally, peptide chain release factor 1 directs the termination of translation in response to the peptide chain termination codons UAG and UAA. The polypeptide is Peptide chain release factor 1 (Mannheimia succiniciproducens (strain KCTC 0769BP / MBEL55E)).